A 129-amino-acid polypeptide reads, in one-letter code: Cuticle protein 12.5 (129 aa).

10 repeat units span residues 7–10 (AAPA), 15–18 (AAPA), 23–26 (AAPA), 28–31 (AAPV), 37–40 (AAPA), 67–70 (AAPA), 79–82 (AAPA), 91–94 (AAPA), 103–106 (AAPA), and 117–120 (AAPA).

Its function is as follows. Component of the cuticle of migratory locust which contains more than 100 different structural proteins. In Locusta migratoria (Migratory locust), this protein is Cuticle protein 12.5.